The chain runs to 485 residues: Glycogen synthase (485 aa).

Residue K20 coordinates ADP-alpha-D-glucose.

It belongs to the glycosyltransferase 1 family. Bacterial/plant glycogen synthase subfamily.

It carries out the reaction [(1-&gt;4)-alpha-D-glucosyl](n) + ADP-alpha-D-glucose = [(1-&gt;4)-alpha-D-glucosyl](n+1) + ADP + H(+). The protein operates within glycan biosynthesis; glycogen biosynthesis. Its function is as follows. Synthesizes alpha-1,4-glucan chains using ADP-glucose. This Vibrio parahaemolyticus serotype O3:K6 (strain RIMD 2210633) protein is Glycogen synthase.